The following is a 292-amino-acid chain: Elongation factor Ts (292 aa).

The interval 82 to 85 is involved in Mg(2+) ion dislocation from EF-Tu; it reads TDFV.

The protein belongs to the EF-Ts family.

It is found in the cytoplasm. Functionally, associates with the EF-Tu.GDP complex and induces the exchange of GDP to GTP. It remains bound to the aminoacyl-tRNA.EF-Tu.GTP complex up to the GTP hydrolysis stage on the ribosome. The polypeptide is Elongation factor Ts (Bordetella avium (strain 197N)).